The primary structure comprises 152 residues: SsrA-binding protein (152 aa).

Belongs to the SmpB family.

It localises to the cytoplasm. In terms of biological role, required for rescue of stalled ribosomes mediated by trans-translation. Binds to transfer-messenger RNA (tmRNA), required for stable association of tmRNA with ribosomes. tmRNA and SmpB together mimic tRNA shape, replacing the anticodon stem-loop with SmpB. tmRNA is encoded by the ssrA gene; the 2 termini fold to resemble tRNA(Ala) and it encodes a 'tag peptide', a short internal open reading frame. During trans-translation Ala-aminoacylated tmRNA acts like a tRNA, entering the A-site of stalled ribosomes, displacing the stalled mRNA. The ribosome then switches to translate the ORF on the tmRNA; the nascent peptide is terminated with the 'tag peptide' encoded by the tmRNA and targeted for degradation. The ribosome is freed to recommence translation, which seems to be the essential function of trans-translation. The chain is SsrA-binding protein from Helicobacter acinonychis (strain Sheeba).